A 231-amino-acid polypeptide reads, in one-letter code: 5'-methylthioadenosine/S-adenosylhomocysteine nucleosidase (231 aa).

The active-site Proton acceptor is the Glu12. Substrate contacts are provided by residues Gly78, Val153, and 174 to 175 (ME). The Proton donor role is filled by Asp198.

The protein belongs to the PNP/UDP phosphorylase family. MtnN subfamily.

The enzyme catalyses S-adenosyl-L-homocysteine + H2O = S-(5-deoxy-D-ribos-5-yl)-L-homocysteine + adenine. It carries out the reaction S-methyl-5'-thioadenosine + H2O = 5-(methylsulfanyl)-D-ribose + adenine. It catalyses the reaction 5'-deoxyadenosine + H2O = 5-deoxy-D-ribose + adenine. It functions in the pathway amino-acid biosynthesis; L-methionine biosynthesis via salvage pathway; S-methyl-5-thio-alpha-D-ribose 1-phosphate from S-methyl-5'-thioadenosine (hydrolase route): step 1/2. Catalyzes the irreversible cleavage of the glycosidic bond in both 5'-methylthioadenosine (MTA) and S-adenosylhomocysteine (SAH/AdoHcy) to adenine and the corresponding thioribose, 5'-methylthioribose and S-ribosylhomocysteine, respectively. Also cleaves 5'-deoxyadenosine, a toxic by-product of radical S-adenosylmethionine (SAM) enzymes, into 5-deoxyribose and adenine. This Vibrio vulnificus (strain YJ016) protein is 5'-methylthioadenosine/S-adenosylhomocysteine nucleosidase.